The primary structure comprises 656 residues: Macrolide export ATP-binding/permease protein MacB (656 aa).

An ABC transporter domain is found at Ile20–Arg258. ATP is bound at residue Gly56 to Ser63. The next 4 helical transmembrane spans lie at Ala284–Gly304, Leu531–Met551, Ala591–Phe611, and Leu619–Leu639.

Belongs to the ABC transporter superfamily. Macrolide exporter (TC 3.A.1.122) family. As to quaternary structure, homodimer.

It is found in the cell inner membrane. In terms of biological role, non-canonical ABC transporter that contains transmembrane domains (TMD), which form a pore in the inner membrane, and an ATP-binding domain (NBD), which is responsible for energy generation. Confers resistance against macrolides. This Azoarcus sp. (strain BH72) protein is Macrolide export ATP-binding/permease protein MacB.